An 83-amino-acid chain; its full sequence is Hainantoxin-III 5 (83 aa).

The signal sequence occupies residues 1 to 21; that stretch reads MKASRFLALAGLVLLFVVGYA. A propeptide spanning residues 22–48 is cleaved from the precursor; the sequence is SESEEKEFPRELLSKIFAVDDFKGEER. Cystine bridges form between Cys-50–Cys-65, Cys-57–Cys-70, and Cys-64–Cys-77. Position 81 is a leucine amide (Leu-81).

This sequence belongs to the neurotoxin 10 (Hwtx-1) family. 15 (Hntx-3) subfamily. Monomer. Expressed by the venom gland.

It localises to the secreted. Its function is as follows. Selective antagonist of neuronal tetrodotoxin (TTX)-sensitive voltage-gated sodium channels (IC(50)=1270 nM on Nav1.1/SCN1A, 270 nM on Nav1.2/SCN2A, 491 nM on Nav1.3/SCN3A and 232 nM on Nav1.7/SCN9A). This toxin suppress Nav1.7 current amplitude without significantly altering the activation, inactivation, and repriming kinetics. Short extreme depolarizations partially activate the toxin-bound channel, indicating voltage-dependent inhibition of this toxin. This toxin increases the deactivation of the Nav1.7 current after extreme depolarizations. The toxin-Nav1.7 complex is gradually dissociated upon prolonged strong depolarizations in a voltage-dependent manner, and the unbound toxin rebinds to Nav1.7 after a long repolarization. Moreover, analysis of chimeric channels showed that the DIIS3-S4 linker is critical for toxin binding to Nav1.7. These data are consistent with this toxin interacting with Nav1.7 site 4 and trapping the domain II voltage sensor in the closed state. The sequence is that of Hainantoxin-III 5 from Cyriopagopus hainanus (Chinese bird spider).